We begin with the raw amino-acid sequence, 359 residues long: MKKYLALALIAPLLISCSTTKKGDTYNEAWVKDTNGFDILMGQFAHNIENFWGFKEVVIAGPKDYVKYTDQYQTRSHINFDDGTITIETIAGTEPAAHLRRAIIKTLLMGDDPSSVDLYSDVDDITISKEPFLYGQVVDNTGQPIRWEGRASNFADYLLKNRLKSRSNGLRIIYSVTINMVPNHLDKRAHKYLGMVRQASRKYGVDESLILAIMQTESSFNPYAVSRSDALGLMQVVQHTAGKDVFRSQGKSGTPSRSFLFDPASNIDTGTAYLAMLNNVYLGGIDNPTSRRYAVITAYNGGAGSVLRVFSNDKIQAANIINTMTPGDVYQTLTTRHPSAESRRYLYKVNTAQKSYRRR.

The first 16 residues, 1 to 16 (MKKYLALALIAPLLIS), serve as a signal peptide directing secretion. A lipid anchor (N-palmitoyl cysteine) is attached at cysteine 17. Cysteine 17 carries S-diacylglycerol cysteine lipidation.

It belongs to the transglycosylase Slt family.

It localises to the cell outer membrane. It catalyses the reaction Exolytic cleavage of the (1-&gt;4)-beta-glycosidic linkage between N-acetylmuramic acid (MurNAc) and N-acetylglucosamine (GlcNAc) residues in peptidoglycan, from either the reducing or the non-reducing ends of the peptidoglycan chains, with concomitant formation of a 1,6-anhydrobond in the MurNAc residue.. Murein-degrading enzyme. May play a role in recycling of muropeptides during cell elongation and/or cell division. This Escherichia coli O7:K1 (strain IAI39 / ExPEC) protein is Membrane-bound lytic murein transglycosylase C.